The primary structure comprises 297 residues: MKPQVYHVDAFTSQPFRGNSAGVVFPADNLSEAQMQLIARELGHSETAFLLHSDDSDVRIRYFTPTVEVPICGHATVAAHYVRAKVLGLGNCTIWQTSLAGKHRVTIEKHNDDYRISLEQGTPGFEPPLEGETRAAIINALHLTEDDILPGLPIQVATTGHSKVMIPLKPEVDIDALSPDLNALTAISKKIGCNGFFPFQIRPGKNETDGRMFSPAIGIVEDPVTGNANGPMGAWLVHHNVLPHDGNVLRVKGHQGRALGRDGMIEVTVTIRDNQPEKVTISGTAVILFHAEWAIEL.

Glu-46 is a catalytic residue.

This sequence belongs to the PhzF family. Homodimer and homotetramer.

This is an uncharacterized protein from Escherichia coli (strain K12).